A 129-amino-acid chain; its full sequence is UPF0325 protein Spro_3794 (129 aa).

Belongs to the UPF0325 family.

The chain is UPF0325 protein Spro_3794 from Serratia proteamaculans (strain 568).